The chain runs to 553 residues: tRNA pseudouridine synthase 1 (553 aa).

The interval 1-78 (MSEEQNLRPV…ETRSKDKDES (78 aa)) is disordered. 2 stretches are compositionally biased toward basic and acidic residues: residues 33–51 (RKADYEDGENSEKRQKPND) and 64–78 (SNEKKETRSKDKDES). The Nucleophile role is filled by Asp158. Positions 517–539 (DLEQKAPSDPTPSDEKGKKPQRP) are disordered.

It belongs to the tRNA pseudouridine synthase TruA family. Zn(2+) is required as a cofactor.

It localises to the nucleus. It carries out the reaction a uridine in tRNA = a pseudouridine in tRNA. The enzyme catalyses uridine in snRNA = pseudouridine in snRNA. The catalysed reaction is a uridine in mRNA = a pseudouridine in mRNA. Formation of pseudouridine at positions 27 and 28 in the anticodon stem and loop of transfer RNAs; at positions 34 and 36 of intron-containing precursor tRNA(Ile) and at position 35 in the intron-containing tRNA(Tyr). Catalyzes pseudouridylation at position 44 in U2 snRNA. Also catalyzes pseudouridylation of mRNAs. This Kluyveromyces lactis (strain ATCC 8585 / CBS 2359 / DSM 70799 / NBRC 1267 / NRRL Y-1140 / WM37) (Yeast) protein is tRNA pseudouridine synthase 1 (PUS1).